The following is a 145-amino-acid chain: MRGLLQRVRGARVEVAGEVVGAIDQGLLVLVAVEPEDSREQADKLLHKLLNYRVFSDEQGKMNLSLKDVGGGLLLVSQFTLAADTRNGMRPSFSTAAPPALGAELFDYLLQQANAQHADVASGRFGADMQVHLVNDGPVTFMLQM.

The Gly-cisPro motif, important for rejection of L-amino acids signature appears at 137–138 (GP).

It belongs to the DTD family. As to quaternary structure, homodimer.

The protein resides in the cytoplasm. The catalysed reaction is glycyl-tRNA(Ala) + H2O = tRNA(Ala) + glycine + H(+). It carries out the reaction a D-aminoacyl-tRNA + H2O = a tRNA + a D-alpha-amino acid + H(+). Functionally, an aminoacyl-tRNA editing enzyme that deacylates mischarged D-aminoacyl-tRNAs. Also deacylates mischarged glycyl-tRNA(Ala), protecting cells against glycine mischarging by AlaRS. Acts via tRNA-based rather than protein-based catalysis; rejects L-amino acids rather than detecting D-amino acids in the active site. By recycling D-aminoacyl-tRNA to D-amino acids and free tRNA molecules, this enzyme counteracts the toxicity associated with the formation of D-aminoacyl-tRNA entities in vivo and helps enforce protein L-homochirality. In Pseudomonas putida (strain GB-1), this protein is D-aminoacyl-tRNA deacylase.